Reading from the N-terminus, the 408-residue chain is Arginine biosynthesis bifunctional protein ArgJ (408 aa).

6 residues coordinate substrate: Thr158, Lys184, Thr195, Glu281, Asn403, and Thr408. The Nucleophile role is filled by Thr195.

It belongs to the ArgJ family. Heterotetramer of two alpha and two beta chains.

Its subcellular location is the cytoplasm. It carries out the reaction N(2)-acetyl-L-ornithine + L-glutamate = N-acetyl-L-glutamate + L-ornithine. It catalyses the reaction L-glutamate + acetyl-CoA = N-acetyl-L-glutamate + CoA + H(+). The protein operates within amino-acid biosynthesis; L-arginine biosynthesis; L-ornithine and N-acetyl-L-glutamate from L-glutamate and N(2)-acetyl-L-ornithine (cyclic): step 1/1. It functions in the pathway amino-acid biosynthesis; L-arginine biosynthesis; N(2)-acetyl-L-ornithine from L-glutamate: step 1/4. Catalyzes two activities which are involved in the cyclic version of arginine biosynthesis: the synthesis of N-acetylglutamate from glutamate and acetyl-CoA as the acetyl donor, and of ornithine by transacetylation between N(2)-acetylornithine and glutamate. The polypeptide is Arginine biosynthesis bifunctional protein ArgJ (Bacillus thuringiensis subsp. konkukian (strain 97-27)).